We begin with the raw amino-acid sequence, 410 residues long: Transforming growth factor beta-3 proprotein (410 aa).

Positions 1 to 23 are cleaved as a signal peptide; that stretch reads MHLQRALVVLALLNLATISLSLS. N-linked (GlcNAc...) asparagine glycosylation is found at N72, N133, and N140. Positions 259–261 match the Cell attachment site motif; sequence RGD. Q291 is subject to N5-methylglutamine. 4 cysteine pairs are disulfide-bonded: C305–C314, C313–C376, C342–C407, and C346–C409.

It belongs to the TGF-beta family. As to quaternary structure, interacts with ASPN. Latency-associated peptide: Homodimer; disulfide-linked. Latency-associated peptide: Interacts with Transforming growth factor beta-3 (TGF-beta-3) chain; interaction is non-covalent and maintains (TGF-beta-3) in a latent state. Latency-associated peptide: Interacts with LRRC32/GARP; leading to regulate activation of TGF-beta-3 and promote epithelial fusion during palate development. Latency-associated peptide: Interacts (via cell attachment site) with integrins, leading to release of the active TGF-beta-3. Transforming growth factor beta-3: Homodimer; disulfide-linked. Transforming growth factor beta-3: Interacts with TGF-beta receptors (TGFBR1 and TGFBR2), leading to signal transduction. Transforming growth factor beta-3 proprotein: The precursor proprotein is cleaved in the Golgi apparatus to form Transforming growth factor beta-3 (TGF-beta-3) and Latency-associated peptide (LAP) chains, which remain non-covalently linked, rendering TGF-beta-3 inactive. Post-translationally, methylated at Gln-291 by N6AMT1. In terms of tissue distribution, expressed in mammary glands with a slight increase in expression prior to lactation and again increasing at the onset of involution, expression peaks at day 3 of involution.

Its subcellular location is the secreted. It localises to the extracellular space. The protein resides in the extracellular matrix. Transforming growth factor beta-3 proprotein: Precursor of the Latency-associated peptide (LAP) and Transforming growth factor beta-3 (TGF-beta-3) chains, which constitute the regulatory and active subunit of TGF-beta-3, respectively. In terms of biological role, required to maintain the Transforming growth factor beta-3 (TGF-beta-3) chain in a latent state during storage in extracellular matrix. Associates non-covalently with TGF-beta-3 and regulates its activation via interaction with 'milieu molecules', such as LTBP1 and LRRC32/GARP, that control activation of TGF-beta-3. Interaction with integrins results in distortion of the Latency-associated peptide chain and subsequent release of the active TGF-beta-3. Its function is as follows. Transforming growth factor beta-3: Multifunctional protein that regulates embryogenesis and cell differentiation and is required in various processes such as secondary palate development. Activation into mature form follows different steps: following cleavage of the proprotein in the Golgi apparatus, Latency-associated peptide (LAP) and Transforming growth factor beta-3 (TGF-beta-3) chains remain non-covalently linked rendering TGF-beta-3 inactive during storage in extracellular matrix. At the same time, LAP chain interacts with 'milieu molecules', such as LTBP1 and LRRC32/GARP that control activation of TGF-beta-3 and maintain it in a latent state during storage in extracellular milieus. TGF-beta-3 is released from LAP by integrins: integrin-binding results in distortion of the LAP chain and subsequent release of the active TGF-beta-3. Once activated following release of LAP, TGF-beta-3 acts by binding to TGF-beta receptors (TGFBR1 and TGFBR2), which transduce signal. In Mus musculus (Mouse), this protein is Transforming growth factor beta-3 proprotein.